Here is a 772-residue protein sequence, read N- to C-terminus: Heat shock protein 88 (772 aa).

Disordered stretches follow at residues 496-519 (TAAP…AEEK) and 729-772 (LGKP…DILD). A compositionally biased stretch (low complexity) spans 497–513 (AAPAETPAETPANGEAA). Basic and acidic residues predominate over residues 735–772 (KPVEVPKEEPKDTPMESKDAPAEEPVATKDQKMDDILD).

The protein belongs to the heat shock protein 70 family.

Its function is as follows. May function in protein folding and assembly, and disassembly of protein complexes. The polypeptide is Heat shock protein 88 (hspH) (Dictyostelium discoideum (Social amoeba)).